The sequence spans 475 residues: Tubulin epsilon chain (475 aa).

Position 148-154 (148-154 (GGGTGSG)) interacts with GTP.

This sequence belongs to the tubulin family. As to quaternary structure, found in a complex with TEDC1, TEDC2, TUBE1 and TUBD1.

The protein localises to the cytoplasm. It is found in the cytoskeleton. Its subcellular location is the microtubule organizing center. It localises to the centrosome. This Mus musculus (Mouse) protein is Tubulin epsilon chain (Tube1).